We begin with the raw amino-acid sequence, 190 residues long: 3-isopropylmalate dehydratase small subunit (190 aa).

The protein belongs to the LeuD family. LeuD type 1 subfamily. As to quaternary structure, heterodimer of LeuC and LeuD.

The enzyme catalyses (2R,3S)-3-isopropylmalate = (2S)-2-isopropylmalate. Its pathway is amino-acid biosynthesis; L-leucine biosynthesis; L-leucine from 3-methyl-2-oxobutanoate: step 2/4. Its function is as follows. Catalyzes the isomerization between 2-isopropylmalate and 3-isopropylmalate, via the formation of 2-isopropylmaleate. The polypeptide is 3-isopropylmalate dehydratase small subunit (Staphylococcus aureus (strain USA300)).